A 75-amino-acid chain; its full sequence is SPbeta prophage-derived uncharacterized protein YorX (75 aa).

The sequence is that of SPbeta prophage-derived uncharacterized protein YorX (yorX) from Bacillus subtilis (strain 168).